A 559-amino-acid chain; its full sequence is DNA ligase (559 aa).

An ATP-binding site is contributed by Glu-247. Lys-249 (N6-AMP-lysine intermediate) is an active-site residue. Residues Arg-254, Arg-269, Glu-299, Phe-339, Arg-414, and Lys-420 each coordinate ATP.

This sequence belongs to the ATP-dependent DNA ligase family. Mg(2+) serves as cofactor.

It carries out the reaction ATP + (deoxyribonucleotide)n-3'-hydroxyl + 5'-phospho-(deoxyribonucleotide)m = (deoxyribonucleotide)n+m + AMP + diphosphate.. It catalyses the reaction NAD(+) + (deoxyribonucleotide)n-3'-hydroxyl + 5'-phospho-(deoxyribonucleotide)m = (deoxyribonucleotide)n+m + AMP + beta-nicotinamide D-nucleotide.. In terms of biological role, DNA ligase that seals nicks in double-stranded DNA during DNA replication, DNA recombination and DNA repair. Shows high activity with either ATP or NAD(+). The protein is DNA ligase of Thermococcus fumicolans.